Here is a 284-residue protein sequence, read N- to C-terminus: MKVFILALLALTATTAIAQLETTCSQGFGQSQQQQQPGQRQLLEQMKPCVAFLQQKCSPLRMPFLQTQVEQLSSCQIVQYQCCQQLAQIPERTRCHAIHIVVEAIIQQQSQQQWQEPQQQAQHKSMRMLLENLSLMCNIYVPVQCQQQQQLGQQQQQQLQEQLTPCTTFLQQQCSPVTVPFPQIPVDQPTSCQNVQHQCCRQLSQIPEQFRCQAIHNVAEAIRQQQPQQQWQGMYQPQQPAQLESIRMSLQALRSMCNIYIPVQCPAPTTYNIPLVATYTGGAC.

The first 18 residues, 1–18 (MKVFILALLALTATTAIA), serve as a signal peptide directing secretion.

This sequence belongs to the prolamin family. Contains disulfide bonds.

In terms of biological role, seed storage protein. Might be integrated via inter-chain disulfide bonds within the glutenin polymer. The sequence is that of Avenin-like b3 from Triticum aestivum (Wheat).